A 417-amino-acid polypeptide reads, in one-letter code: Membrane protein UL43 (417 aa).

The tract at residues 1–21 (MLRNDSHRAVSPEDGQGRVDD) is disordered. Transmembrane regions (helical) follow at residues 57–77 (GPYANAASGAFAVGCAVLGFM), 90–110 (IYAWLKLAAGGAALVLWSLGE), 119–139 (APGPATQCLALGAAYAALLVL), 146–166 (LFLLAPGPLFVGTLGMVVGGL), and 175–195 (WWIGGPAAAALAAAVLAGPGA). The interval 217–254 (AGESLSRRPPEDPERPGVPGPPSPPTPQRSHGPPADEV) is disordered. The segment covering 221 to 231 (LSRRPPEDPER) has biased composition (basic and acidic residues). Residues 232-243 (PGVPGPPSPPTP) show a composition bias toward pro residues. 5 helical membrane-spanning segments follow: residues 263–283 (ENVWVPVVTFLGAGALAVKTV), 291–311 (PGPGLPLWPQVFLGGHVAVAL), 323–343 (LTDPLLFVHAGLQVINLGLVF), 348–368 (VVVYAALGGAVWISLAQVLGL), and 389–409 (GLFFSVYALGFGVGVLLCPPG).

It belongs to the alphaherpesvirinae HHV-1 UL43 family.

The protein localises to the membrane. In Human herpesvirus 1 (strain 17) (HHV-1), this protein is Membrane protein UL43.